Here is a 241-residue protein sequence, read N- to C-terminus: Bidirectional sugar transporter SWEET17 (241 aa).

Residues methionine 1 to glutamate 3 are Vacuolar-facing. A helical membrane pass occupies residues alanine 4–valine 24. In terms of domain architecture, MtN3/slv 1 spans phenylalanine 6–histidine 92. Residues glutamate 25–serine 41 lie on the Cytoplasmic side of the membrane. A helical transmembrane segment spans residues leucine 42–proline 62. At glycine 63–threonine 69 the chain is on the vacuolar side. A helical membrane pass occupies residues valine 70–proline 90. Residues arginine 91–lysine 94 lie on the Cytoplasmic side of the membrane. A helical transmembrane segment spans residues leucine 95–alanine 115. The Vacuolar portion of the chain corresponds to threonine 116–glutamine 128. Residues serine 129 to methionine 149 traverse the membrane as a helical segment. Residues serine 129 to alanine 212 enclose the MtN3/slv 2 domain. The Cytoplasmic segment spans residues lysine 150–methionine 161. A helical transmembrane segment spans residues proline 162–leucine 182. Topologically, residues glutamine 183–aspartate 185 are vacuolar. The helical transmembrane segment at valine 186–tyrosine 206 threads the bilayer. At glycine 207–serine 241 the chain is on the cytoplasmic side.

The protein belongs to the SWEET sugar transporter family. Forms homooligomers and heterooligomers with SWEET1, SWEET2, SWEET3, SWEET4, SWEET6, SWEET7, SWEET8, SWEET9, SWEET11, SWEET12, SWEET13, SWEET15 and SWEET16. In terms of tissue distribution, expressed in leaves at low levels, mostly in xylem and parenchyma. Highly expressed in the cortex of roots, predominantly in tips and mature regions, especially in tonoplasts. Also accumulates in cotyledons, stems, flowers, and siliques.

It is found in the vacuole membrane. In terms of biological role, acts as a vacuolar hexose transporter. Regulates fructose (Fru) homeostasis in leaves and roots by exporting/importing Fru through the tonoplast regarding metabolic demand. The sequence is that of Bidirectional sugar transporter SWEET17 from Arabidopsis thaliana (Mouse-ear cress).